Consider the following 209-residue polypeptide: Large ribosomal subunit protein uL3 (209 aa).

A disordered region spans residues 130 to 162 (RGPMTHGSKFKRAPGSMGASSDPSRTFKNKRMP).

This sequence belongs to the universal ribosomal protein uL3 family. In terms of assembly, part of the 50S ribosomal subunit. Forms a cluster with proteins L14 and L19.

Its function is as follows. One of the primary rRNA binding proteins, it binds directly near the 3'-end of the 23S rRNA, where it nucleates assembly of the 50S subunit. The sequence is that of Large ribosomal subunit protein uL3 from Clostridium botulinum (strain Alaska E43 / Type E3).